We begin with the raw amino-acid sequence, 57 residues long: U13-myrmicitoxin-Mri1a (57 aa).

Positions 1–23 are cleaved as a signal peptide; the sequence is MKIIHVLLLVAVVAITMSPSIMA. A propeptide spanning residues 24 to 29 is cleaved from the precursor; sequence ESVAEA. Glu-56 carries the glutamic acid 1-amide modification.

As to expression, expressed by the venom gland.

The protein resides in the secreted. Induces paralysis 1 hour after injection into insects (blowfly L.caesar) but does not appear to be lethal. The polypeptide is U13-myrmicitoxin-Mri1a (Manica rubida (European giant red ant)).